A 308-amino-acid chain; its full sequence is HTH-type transcriptional regulator SsuR (308 aa).

In terms of domain architecture, HTH lysR-type spans 1–59 (MNFQQLRFVREAVRQNMNLTEVANVLYTSQSGVSKQIKDLEDELGVDIFIRRGKRLTGL). The segment at residues 19–38 (LTEVANVLYTSQSGVSKQIK) is a DNA-binding region (H-T-H motif).

It belongs to the LysR transcriptional regulatory family.

In terms of biological role, transcriptional regulator that is essential for the utilization of a number of organic sulfur sources of either environmental or human origin. Required for aliphatic sulfonate utilization. Binds to DNA at target promoter regions. Targets include the ssuDBC operon, the tauABC operon, three tauD-type genes and atsA. The chain is HTH-type transcriptional regulator SsuR from Burkholderia cenocepacia (strain ATCC BAA-245 / DSM 16553 / LMG 16656 / NCTC 13227 / J2315 / CF5610) (Burkholderia cepacia (strain J2315)).